A 215-amino-acid polypeptide reads, in one-letter code: Cytochrome b6 (215 aa).

Residues 32 to 52 (IFYCLGGITLTCFLVQVATGF) traverse the membrane as a helical segment. A heme c-binding site is contributed by cysteine 35. Histidine 86 and histidine 100 together coordinate heme b. The next 3 helical transmembrane spans lie at 90–110 (ASMM…TGGF), 116–136 (LTWV…VTGY), and 186–206 (LHTF…FLMI). Heme b is bound by residues histidine 187 and histidine 202.

This sequence belongs to the cytochrome b family. PetB subfamily. In terms of assembly, the 4 large subunits of the cytochrome b6-f complex are cytochrome b6, subunit IV (17 kDa polypeptide, PetD), cytochrome f and the Rieske protein, while the 4 small subunits are PetG, PetL, PetM and PetN. The complex functions as a dimer. The cofactor is heme b. Heme c serves as cofactor.

Its subcellular location is the plastid. The protein localises to the chloroplast thylakoid membrane. Its function is as follows. Component of the cytochrome b6-f complex, which mediates electron transfer between photosystem II (PSII) and photosystem I (PSI), cyclic electron flow around PSI, and state transitions. This Arabidopsis thaliana (Mouse-ear cress) protein is Cytochrome b6.